A 376-amino-acid polypeptide reads, in one-letter code: Alanine racemase (376 aa).

K44 acts as the Proton acceptor; specific for D-alanine in catalysis. K44 bears the N6-(pyridoxal phosphate)lysine mark. R139 provides a ligand contact to substrate. The active-site Proton acceptor; specific for L-alanine is Y271. Substrate is bound at residue M319.

This sequence belongs to the alanine racemase family. It depends on pyridoxal 5'-phosphate as a cofactor.

It catalyses the reaction L-alanine = D-alanine. It functions in the pathway amino-acid biosynthesis; D-alanine biosynthesis; D-alanine from L-alanine: step 1/1. Its function is as follows. Catalyzes the interconversion of L-alanine and D-alanine. May also act on other amino acids. The sequence is that of Alanine racemase (alr) from Bordetella petrii (strain ATCC BAA-461 / DSM 12804 / CCUG 43448).